Consider the following 293-residue polypeptide: 33 kDa chaperonin (293 aa).

2 cysteine pairs are disulfide-bonded: Cys237–Cys239 and Cys271–Cys274.

This sequence belongs to the HSP33 family. Post-translationally, under oxidizing conditions two disulfide bonds are formed involving the reactive cysteines. Under reducing conditions zinc is bound to the reactive cysteines and the protein is inactive.

The protein resides in the cytoplasm. In terms of biological role, redox regulated molecular chaperone. Protects both thermally unfolding and oxidatively damaged proteins from irreversible aggregation. Plays an important role in the bacterial defense system toward oxidative stress. The sequence is that of 33 kDa chaperonin from Haemophilus influenzae (strain PittGG).